The primary structure comprises 217 residues: 3-demethoxyubiquinol 3-hydroxylase (217 aa).

Fe cation is bound by residues glutamate 66, glutamate 96, histidine 99, glutamate 148, glutamate 180, and histidine 183.

The protein belongs to the COQ7 family. Fe cation serves as cofactor.

It localises to the cell membrane. The enzyme catalyses a 5-methoxy-2-methyl-3-(all-trans-polyprenyl)benzene-1,4-diol + AH2 + O2 = a 3-demethylubiquinol + A + H2O. It functions in the pathway cofactor biosynthesis; ubiquinone biosynthesis. In terms of biological role, catalyzes the hydroxylation of 2-nonaprenyl-3-methyl-6-methoxy-1,4-benzoquinol during ubiquinone biosynthesis. The chain is 3-demethoxyubiquinol 3-hydroxylase from Xanthomonas axonopodis pv. citri (strain 306).